A 404-amino-acid polypeptide reads, in one-letter code: Transcription factor sem-2 (404 aa).

A DNA-binding region (HMG box) is located at residues 93–161; it reads IKRPMNAFMV…CHMQEYPDYK (69 aa). 2 disordered regions span residues 158–218 and 321–359; these read PDYK…QFQN and HTSP…NSAG. Residues 177–199 show a composition bias toward low complexity; the sequence is QQPAQPQAPQQQQAPPRGASPQA. 2 stretches are compositionally biased toward polar residues: residues 207–218 and 347–359; these read TDQQSETQQFQN and ASEQ…NSAG.

The protein resides in the nucleus. Functionally, probable transcription factor required for embryogenesis, vulval development and cell fate specification of the postembryonic mesoderm (also known as the M lineage). Specifically, required for the specification of sex myoblast cells and their development into the muscles that are necessary for egg-laying. In addition, may be involved in RME GABAergic motor neuron progenitor cell fate specification. The sequence is that of Transcription factor sem-2 from Caenorhabditis elegans.